Here is a 450-residue protein sequence, read N- to C-terminus: Phosphoglucosamine mutase (450 aa).

Catalysis depends on Ser-101, which acts as the Phosphoserine intermediate. Mg(2+)-binding residues include Ser-101, Asp-240, Asp-242, and Asp-244. The residue at position 101 (Ser-101) is a Phosphoserine.

The protein belongs to the phosphohexose mutase family. Mg(2+) serves as cofactor. Post-translationally, activated by phosphorylation.

The catalysed reaction is alpha-D-glucosamine 1-phosphate = D-glucosamine 6-phosphate. Its function is as follows. Catalyzes the conversion of glucosamine-6-phosphate to glucosamine-1-phosphate. This Streptococcus equi subsp. zooepidemicus (strain MGCS10565) protein is Phosphoglucosamine mutase.